We begin with the raw amino-acid sequence, 363 residues long: Uroporphyrinogen decarboxylase (363 aa).

Residues 27–31, Asp77, Tyr157, Thr212, and His333 contribute to the substrate site; that span reads RQAGR.

This sequence belongs to the uroporphyrinogen decarboxylase family. As to quaternary structure, homodimer.

It is found in the cytoplasm. The catalysed reaction is uroporphyrinogen III + 4 H(+) = coproporphyrinogen III + 4 CO2. The protein operates within porphyrin-containing compound metabolism; protoporphyrin-IX biosynthesis; coproporphyrinogen-III from 5-aminolevulinate: step 4/4. Functionally, catalyzes the decarboxylation of four acetate groups of uroporphyrinogen-III to yield coproporphyrinogen-III. This is Uroporphyrinogen decarboxylase from Cupriavidus pinatubonensis (strain JMP 134 / LMG 1197) (Cupriavidus necator (strain JMP 134)).